Here is a 338-residue protein sequence, read N- to C-terminus: MKRINLTRYLIEEQREHNTIPAELRLLLEVVARACKAISHSVNKGALAGVLGSAGTGNVQGETQQKLDVIANEVLLEANEYGGNLAAMASEEMESFYEIPHRYPKGEYLLLFDPLDGSSNIDVNVSIGTIFSVLHMPKPGQTVTEADFMQPGVRQVAAGYAVYGPQTTLVLTVGNGVHMFTLDREVGSFILTNRDVKIPADTKEFAINMSNMRHWAPPVRRYIDECLAGTEGPRGKDFNMRWIASMVADVHRILTRGGIFMYPWDKREPGKAGKLRLMYEANPMAFLVEQAGGAATNGHQRILEIQPEKLHQRVAVILGSKNEVDRVTQYHREAQQTA.

Mg(2+) is bound by residues Glu-91, Asp-113, Leu-115, and Asp-116. Residues Asp-116–Ser-119, Asn-208, and Lys-274 each bind substrate. Glu-280 contributes to the Mg(2+) binding site.

Belongs to the FBPase class 1 family. As to quaternary structure, homotetramer. The cofactor is Mg(2+).

The protein localises to the cytoplasm. The catalysed reaction is beta-D-fructose 1,6-bisphosphate + H2O = beta-D-fructose 6-phosphate + phosphate. It participates in carbohydrate biosynthesis; gluconeogenesis. The sequence is that of Fructose-1,6-bisphosphatase class 1 from Ralstonia nicotianae (strain ATCC BAA-1114 / GMI1000) (Ralstonia solanacearum).